Consider the following 352-residue polypeptide: Ion-translocating oxidoreductase complex subunit D (352 aa).

Transmembrane regions (helical) follow at residues 20–40 (IMLL…WFFG), 42–62 (GTLV…ALVL), 89–109 (IPPL…VIIA), and 123–143 (PAMI…TSWL). Thr-187 bears the FMN phosphoryl threonine mark. 5 consecutive transmembrane segments (helical) span residues 214–234 (ILAG…GLWL), 242–262 (WHIP…GWLF), 267–287 (LAAP…FFIL), 301–321 (LIFG…GGYP), and 322–342 (DGVA…DYYT).

Belongs to the NqrB/RnfD family. As to quaternary structure, the complex is composed of six subunits: RsxA, RsxB, RsxC, RsxD, RsxE and RsxG. Requires FMN as cofactor.

The protein resides in the cell inner membrane. In terms of biological role, part of a membrane-bound complex that couples electron transfer with translocation of ions across the membrane. Required to maintain the reduced state of SoxR. The chain is Ion-translocating oxidoreductase complex subunit D from Shigella boydii serotype 18 (strain CDC 3083-94 / BS512).